Here is an 896-residue protein sequence, read N- to C-terminus: DNA mismatch repair protein MutS (896 aa).

An ATP-binding site is contributed by 638–645 (GPNMSGKS).

Belongs to the DNA mismatch repair MutS family.

Functionally, this protein is involved in the repair of mismatches in DNA. It is possible that it carries out the mismatch recognition step. This protein has a weak ATPase activity. The sequence is that of DNA mismatch repair protein MutS from Fusobacterium nucleatum subsp. nucleatum (strain ATCC 25586 / DSM 15643 / BCRC 10681 / CIP 101130 / JCM 8532 / KCTC 2640 / LMG 13131 / VPI 4355).